Reading from the N-terminus, the 175-residue chain is Endoribonuclease YbeY (175 aa).

Positions 129, 133, and 139 each coordinate Zn(2+).

Belongs to the endoribonuclease YbeY family. It depends on Zn(2+) as a cofactor.

It is found in the cytoplasm. Functionally, single strand-specific metallo-endoribonuclease involved in late-stage 70S ribosome quality control and in maturation of the 3' terminus of the 16S rRNA. The protein is Endoribonuclease YbeY of Lactobacillus johnsonii (strain CNCM I-12250 / La1 / NCC 533).